The following is a 593-amino-acid chain: Epidermal growth factor receptor kinase substrate 8-like protein 3 (593 aa).

The region spanning 28–155 (QHRVEHLMTC…ALEEELEQRP (128 aa)) is the PTB domain. Disordered stretches follow at residues 149 to 171 (EELE…RGPA), 184 to 239 (LEPG…ERDE), and 374 to 451 (ADWT…PAQP). Ser231 bears the Phosphoserine mark. Residues 386 to 401 (PTFSDDWQLPEPSSQA) show a composition bias toward polar residues. Over residues 425 to 435 (PQEKTHNHDPQ) the composition is skewed to basic and acidic residues. The region spanning 450–509 (QPALKMQVLYEFEARNPRELTVVQGEKLEVLDHSKRWWLVKNEAGRSGYIPSNILEPLQP) is the SH3 domain.

It belongs to the EPS8 family. As to quaternary structure, interacts with ABI1. Part of a complex that contains SOS1, ABI1 and EPS8L2. Interacts with FASLG.

The protein resides in the cytoplasm. The sequence is that of Epidermal growth factor receptor kinase substrate 8-like protein 3 (EPS8L3) from Homo sapiens (Human).